We begin with the raw amino-acid sequence, 65 residues long: Large ribosomal subunit protein uL29 (65 aa).

It belongs to the universal ribosomal protein uL29 family.

The sequence is that of Large ribosomal subunit protein uL29 from Leptothrix cholodnii (strain ATCC 51168 / LMG 8142 / SP-6) (Leptothrix discophora (strain SP-6)).